The following is a 475-amino-acid chain: Solute carrier family 46 member 2 (475 aa).

Over 1–23 (MSPEVTCPRRGHLPRFHPRTWVE) the chain is Cytoplasmic. Residues 24 to 44 (PVVASSQVAASLYDAGLLLVV) form a helical membrane-spanning segment. Residues 45–78 (KASYGTGGSSNHSASPSPRGALEDQQQRAISNFY) lie on the Extracellular side of the membrane. N-linked (GlcNAc...) asparagine glycosylation occurs at asparagine 55. The chain crosses the membrane as a helical span at residues 79–99 (IIYNLVVGLSPLLSAYGLGWL). Over 100 to 108 (SDRYHRKIS) the chain is Cytoplasmic. Residues 109 to 129 (ICMSLLGFLLSRLGLLLKVLL) form a helical membrane-spanning segment. The Extracellular segment spans residues 130–138 (DWPVEVLYG). Residues 139–159 (AAALNGLFGGFSAFWSGVMAL) traverse the membrane as a helical segment. At 160-172 (GSLGSSEGRRSVR) the chain is on the cytoplasmic side. The chain crosses the membrane as a helical span at residues 173-193 (LILIDLMLGLAGFCGSMASGH). Residues 194–205 (LFKQMAGHSGQG) lie on the Extracellular side of the membrane. A helical transmembrane segment spans residues 206–226 (LILTACSVSCASFALLYSLLV). Over 227-282 (LKVPESVAKPSQELPAVDTVSGTVGTYRTLDPDQLDQQYAVGHPPSPGKAKPHKTT) the chain is Cytoplasmic. The chain crosses the membrane as a helical span at residues 283–303 (IALLFVGAIIYDLAVVGTVDV). The Extracellular segment spans residues 304-320 (IPLFVLREPLGWNQVQV). Residues 321-341 (GYGMAAGYTIFITSFLGVLVF) form a helical membrane-spanning segment. Residues 342–347 (SRCFRD) are Cytoplasmic-facing. Residues 348-368 (TTMIMIGMVSFGSGALLLAFV) traverse the membrane as a helical segment. Over 369-370 (KE) the chain is Extracellular. The chain crosses the membrane as a helical span at residues 371 to 391 (TYMFYIARAVMLFALIPVTTI). At 392-406 (RSAMSKLIKGSSYGK) the chain is on the cytoplasmic side. Residues 407–427 (VFVILQLSLALTGVVTSTLYN) traverse the membrane as a helical segment. Residues 428 to 435 (KIYQLTMD) are Extracellular-facing. A helical transmembrane segment spans residues 436–456 (MFVGSCFALSSFLSFLAIIPI). Residues 457-475 (SIVAYKQVPLSPYGDIIEK) are Cytoplasmic-facing.

The protein belongs to the major facilitator superfamily. SLC46A family. Glycosylated. In terms of tissue distribution, strongly expressed in the adult thymus. Expressed in spleen, lymph nodes, thymus, PBL, bone marrow and fetal liver. Expressed in monocytes and pre-dendridic cells.

The protein localises to the endosome membrane. The protein resides in the cell membrane. It catalyses the reaction N-acetyl-beta-D-glucosaminyl-(1-&gt;4)-1,6-anhydro-N-acetyl-beta-D-muramoyl-L-alanyl-gamma-D-glutamyl-meso-2,6-diaminopimeloyl-D-alanine(out) + n H(+)(out) = N-acetyl-beta-D-glucosaminyl-(1-&gt;4)-1,6-anhydro-N-acetyl-beta-D-muramoyl-L-alanyl-gamma-D-glutamyl-meso-2,6-diaminopimeloyl-D-alanine(in) + n H(+)(in). The enzyme catalyses L-alanyl-gamma-D-glutamyl-meso-2,6-diaminopimelate(out) + n H(+)(out) = L-alanyl-gamma-D-glutamyl-meso-2,6-diaminopimelate(in) + n H(+)(in). It carries out the reaction N-acetyl-D-muramoyl-L-alanyl-D-isoglutamine(out) + n H(+)(out) = N-acetyl-D-muramoyl-L-alanyl-D-isoglutamine(in) + n H(+)(in). The catalysed reaction is 2',3'-cGAMP(out) + n H(+)(out) = 2',3'-cGAMP(in) + n H(+)(in). It catalyses the reaction 3',3'-cGAMP(out) + n H(+)(out) = 3',3'-cGAMP(in) + n H(+)(in). In terms of biological role, proton-coupled transporter that delivers pathogen-associated or danger-associated molecular patterns to cytosolic pattern recognition receptors as part of the innate immune response to microbes or tissue injury. Has selectivity toward muropeptides that contain the amino acid diaminopimelic acid (DAP-type peptidoglycan muropeptides) including Tri-DAP and tracheal toxin (TCT), common in Gram-negative bacteria and Gram-positive bacilli. In the context of immune recognition of skin microbiota, shuttles bacterial muropeptides across the endolysosomal membranes into the cytosol for recognition by NOD1, triggering MYD88-dependent secretion of IL1A and neutrophil recruitment in a pyroptosis-type inflammatory process. To a lesser extent and redundantly, transports muramyl dipeptides derived from most bacterial proteoglycans, eliciting NOD2 receptor activation and downstream inflammatory responses. Postulated to function as a dominant importer of cyclic GMP-AMP dinucleotides (cGAMPs) in monocyte and macrophage cell lineages. Selectively imports cGAMPs derived from pathogenic bacteria such as 3'3'-cGAMP thus providing for differential immune recognition of pathogenic versus commensal bacteria. During tumorigenesis may transport extracellular tumor-derived 2'3'-cGAMP across the plasma membrane of M1-polarized macrophages to activate the anti-tumoral stimulator of interferon genes (STING) pathway. The transport mechanism, its electrogenicity and stoichiometry remain to be elucidated. This Homo sapiens (Human) protein is Solute carrier family 46 member 2.